Here is a 787-residue protein sequence, read N- to C-terminus: PAN2-PAN3 deadenylation complex subunit pan3 (787 aa).

The tract at residues 1–20 (MNSGLTPSPSPAVAAAGPAG) is disordered. Over residues 11–20 (PAVAAAGPAG) the composition is skewed to low complexity. The segment at 23–51 (GSKLKFCRYYAKDRTCFYGDECQFLHDDQ) adopts a C3H1-type zinc-finger fold. Disordered stretches follow at residues 131–162 (EATY…AAHD), 179–210 (TMSQ…MSQS), and 226–291 (GGPT…PPST). Composition is skewed to low complexity over residues 143–154 (NSSSSPSLLNDS) and 200–210 (STSRLSNMSQS). Residues 185–200 (KTPNPTASEFIPKGGS) carry the PABPC-interacting motif-2 (PAM-2) motif. A compositionally biased stretch (polar residues) spans 265–290 (TPNPANYMVPTSASTPVTNSVSQPPS). The pseudokinase domain stretch occupies residues 365–650 (QIDQADMPGV…SVNDIMPMIG (286 aa)). ATP contacts are provided by residues Arg422, 471–478 (DFHAGSET), and 545–546 (TK). Positions 651–689 (ARFYTQLDAAQMRNDVIEEDLAKEVQNGRLFRLLAKLGT) form a coiled coil. The interval 690-787 (INERPEFQKD…ELVAAANGQL (98 aa)) is knob domain.

It belongs to the protein kinase superfamily. PAN3 family. As to quaternary structure, homodimer. Forms a heterotrimer with a catalytic subunit pan2 to form the poly(A)-nuclease (PAN) deadenylation complex. Interacts (via PAM-2 motif) with poly(A)-binding protein pabpc1 (via PABC domain), conferring substrate specificity of the enzyme complex. Interacts with the GW182 family proteins tnrc6a, tnrc6b and tnrc6c.

The protein localises to the cytoplasm. It is found in the P-body. Regulatory subunit of the poly(A)-nuclease (PAN) deadenylation complex, one of two cytoplasmic mRNA deadenylases involved in general and miRNA-mediated mRNA turnover. PAN specifically shortens poly(A) tails of RNA and the activity is stimulated by poly(A)-binding protein (PABP). PAN deadenylation is followed by rapid degradation of the shortened mRNA tails by the CCR4-NOT complex. Deadenylated mRNAs are then degraded by two alternative mechanisms, namely exosome-mediated 3'-5' exonucleolytic degradation, or deadenylation-dependent mRNA decaping and subsequent 5'-3' exonucleolytic degradation by XRN1. PAN3 acts as a positive regulator for PAN activity, recruiting the catalytic subunit PAN2 to mRNA via its interaction with RNA and PABP, and to miRNA targets via its interaction with GW182 family proteins. In Xenopus tropicalis (Western clawed frog), this protein is PAN2-PAN3 deadenylation complex subunit pan3.